The chain runs to 89 residues: DNA-directed RNA polymerase subunit omega (89 aa).

This sequence belongs to the RNA polymerase subunit omega family. As to quaternary structure, the RNAP catalytic core consists of 2 alpha, 1 beta, 1 beta' and 1 omega subunit. When a sigma factor is associated with the core the holoenzyme is formed, which can initiate transcription.

The enzyme catalyses RNA(n) + a ribonucleoside 5'-triphosphate = RNA(n+1) + diphosphate. Functionally, promotes RNA polymerase assembly. Latches the N- and C-terminal regions of the beta' subunit thereby facilitating its interaction with the beta and alpha subunits. The polypeptide is DNA-directed RNA polymerase subunit omega (Idiomarina loihiensis (strain ATCC BAA-735 / DSM 15497 / L2-TR)).